Here is a 560-residue protein sequence, read N- to C-terminus: CTP synthase (560 aa).

The interval methionine 1–methionine 272 is amidoligase domain. Position 20 (serine 20) interacts with CTP. A UTP-binding site is contributed by serine 20. ATP contacts are provided by residues serine 21–leucine 26 and aspartate 78. Mg(2+)-binding residues include aspartate 78 and glutamate 146. Residues aspartate 153–glutamate 155, lysine 193–glutamine 198, and lysine 229 contribute to the CTP site. UTP contacts are provided by residues lysine 193–glutamine 198 and lysine 229. The Glutamine amidotransferase type-1 domain maps to threonine 297–arginine 539. Glycine 356 contacts L-glutamine. Residue cysteine 383 is the Nucleophile; for glutamine hydrolysis of the active site. L-glutamine-binding positions include methionine 384 to glutamine 387, glutamate 407, and arginine 467. Residues histidine 512 and glutamate 514 contribute to the active site.

This sequence belongs to the CTP synthase family. Homotetramer.

The catalysed reaction is UTP + L-glutamine + ATP + H2O = CTP + L-glutamate + ADP + phosphate + 2 H(+). It catalyses the reaction L-glutamine + H2O = L-glutamate + NH4(+). It carries out the reaction UTP + NH4(+) + ATP = CTP + ADP + phosphate + 2 H(+). It functions in the pathway pyrimidine metabolism; CTP biosynthesis via de novo pathway; CTP from UDP: step 2/2. Its activity is regulated as follows. Allosterically activated by GTP, when glutamine is the substrate; GTP has no effect on the reaction when ammonia is the substrate. The allosteric effector GTP functions by stabilizing the protein conformation that binds the tetrahedral intermediate(s) formed during glutamine hydrolysis. Inhibited by the product CTP, via allosteric rather than competitive inhibition. Functionally, catalyzes the ATP-dependent amination of UTP to CTP with either L-glutamine or ammonia as the source of nitrogen. Regulates intracellular CTP levels through interactions with the four ribonucleotide triphosphates. The sequence is that of CTP synthase from Anaplasma marginale (strain Florida).